The following is a 286-amino-acid chain: ATP phosphoribosyltransferase (286 aa).

It belongs to the ATP phosphoribosyltransferase family. Long subfamily. Mg(2+) serves as cofactor.

The protein resides in the cytoplasm. It catalyses the reaction 1-(5-phospho-beta-D-ribosyl)-ATP + diphosphate = 5-phospho-alpha-D-ribose 1-diphosphate + ATP. It participates in amino-acid biosynthesis; L-histidine biosynthesis; L-histidine from 5-phospho-alpha-D-ribose 1-diphosphate: step 1/9. Its activity is regulated as follows. Feedback inhibited by histidine. Catalyzes the condensation of ATP and 5-phosphoribose 1-diphosphate to form N'-(5'-phosphoribosyl)-ATP (PR-ATP). Has a crucial role in the pathway because the rate of histidine biosynthesis seems to be controlled primarily by regulation of HisG enzymatic activity. This is ATP phosphoribosyltransferase from Paenarthrobacter aurescens (strain TC1).